A 217-amino-acid polypeptide reads, in one-letter code: MVGIIGKKLGMTTVFDETGNAIAVTVVEAGPCTVMQIRDNEKDGYSAIQLGYGAVKEKHLKKPQIGQFKKANLEPKKYLKEFRMDDASSYTVGQELKADIFQAGDFIDVSSLSKGRGFAGVMKRHNYDGGPMSHGSNFRRRAGSIGCNSYPARVWKGKGMPGHMGNTLTTIQNLKVVEIRPDDNLIMIKGAIPGAINSIVKLTSAVKKRNKKKNSMN.

Belongs to the universal ribosomal protein uL3 family. As to quaternary structure, part of the 50S ribosomal subunit. Forms a cluster with proteins L14 and L19.

Its function is as follows. One of the primary rRNA binding proteins, it binds directly near the 3'-end of the 23S rRNA, where it nucleates assembly of the 50S subunit. This is Large ribosomal subunit protein uL3 from Brachyspira hyodysenteriae (strain ATCC 49526 / WA1).